The primary structure comprises 219 residues: ATP-dependent dethiobiotin synthetase BioD (219 aa).

14-19 (DVGKTY) is a binding site for ATP. Threonine 18 lines the Mg(2+) pocket. The active site involves lysine 37. Serine 41 is a binding site for substrate. Residues aspartate 54, 114 to 117 (EGAG), and 175 to 176 (NN) contribute to the ATP site. 2 residues coordinate Mg(2+): aspartate 54 and glutamate 114.

Belongs to the dethiobiotin synthetase family. In terms of assembly, homodimer. Mg(2+) serves as cofactor.

It is found in the cytoplasm. It carries out the reaction (7R,8S)-7,8-diammoniononanoate + CO2 + ATP = (4R,5S)-dethiobiotin + ADP + phosphate + 3 H(+). It participates in cofactor biosynthesis; biotin biosynthesis; biotin from 7,8-diaminononanoate: step 1/2. In terms of biological role, catalyzes a mechanistically unusual reaction, the ATP-dependent insertion of CO2 between the N7 and N8 nitrogen atoms of 7,8-diaminopelargonic acid (DAPA, also called 7,8-diammoniononanoate) to form a ureido ring. The protein is ATP-dependent dethiobiotin synthetase BioD of Fusobacterium nucleatum subsp. nucleatum (strain ATCC 25586 / DSM 15643 / BCRC 10681 / CIP 101130 / JCM 8532 / KCTC 2640 / LMG 13131 / VPI 4355).